Consider the following 226-residue polypeptide: Ornithine decarboxylase antizyme (226 aa).

The protein belongs to the ODC antizyme family. As to quaternary structure, interacts with ODC and thereby sterically blocks ODC homodimerization.

Functionally, ornithine decarboxylase (ODC) antizyme protein that negatively regulates ODC activity and intracellular polyamine biosynthesis in response to increased intracellular polyamine levels. Binds to ODC monomers, inhibiting the assembly of the functional ODC homodimer, and targets the monomers for ubiquitin-independent proteolytic destruction by the 26S proteasome. The sequence is that of Ornithine decarboxylase antizyme (spa1) from Schizosaccharomyces japonicus (Fission yeast).